A 473-amino-acid polypeptide reads, in one-letter code: GTPase Der (473 aa).

EngA-type G domains lie at 3–167 and 204–379; these read LTIA…GKDK and IRIA…RIWN. GTP is bound by residues 9-16, 56-60, 119-122, 210-217, 257-261, and 322-325; these read GRPNVGKS, DTAGL, NKSE, GRPNTGKS, and NKWD. Residues 380–464 enclose the KH-like domain; that stretch reads RRISTGKLNR…PIRLSLRTSD (85 aa).

Belongs to the TRAFAC class TrmE-Era-EngA-EngB-Septin-like GTPase superfamily. EngA (Der) GTPase family. In terms of assembly, associates with the 50S ribosomal subunit.

Functionally, GTPase that plays an essential role in the late steps of ribosome biogenesis. This is GTPase Der from Bartonella bacilliformis (strain ATCC 35685 / KC583 / Herrer 020/F12,63).